Reading from the N-terminus, the 2063-residue chain is Rho guanine nucleotide exchange factor 17 (2063 aa).

4 disordered regions span residues 22–365 (WSGG…MSDS), 380–466 (YLAS…SNPD), 485–581 (LRVR…AEED), and 602–958 (IQRM…RHVR). Low complexity predominate over residues 65 to 76 (PLAAPAQPRPLR). Over residues 87–96 (RRFDAPRLDD) the composition is skewed to basic and acidic residues. The segment covering 108 to 122 (PAAAEEAAEGPARGA) has biased composition (low complexity). 2 positions are modified to phosphoserine: serine 142 and serine 152. Over residues 225–250 (AGARASCSSSSIAASYPVSRSRAASS) the composition is skewed to low complexity. Serine 310 is modified (phosphoserine). The span at 313-323 (LNLSSMNSAGV) shows a compositional bias: polar residues. Phosphoserine occurs at positions 326, 332, 383, 387, 395, 410, and 420. Residues 388–397 (RGSSRYSSTE) are compositionally biased toward polar residues. Residues 445-456 (ALRDGGFEPEKS) are compositionally biased toward basic and acidic residues. A phosphoserine mark is found at serine 461 and serine 546. Residues 562–573 (SALKSSSSELLL) show a composition bias toward low complexity. At serine 619 the chain carries Phosphoserine. Positions 671 to 680 (LSSSSAQTNH) are enriched in polar residues. At serine 696 the chain carries Phosphoserine. 2 positions are modified to phosphothreonine: threonine 699 and threonine 702. Residue serine 735 is modified to Phosphoserine. Residues 754-765 (SVDSNLLGSLSP) are compositionally biased toward polar residues. The segment covering 827-836 (SLSDPSRRGE) has biased composition (basic and acidic residues). Phosphoserine is present on serine 914. Positions 917–928 (LIRRGSKKRPAR) are enriched in basic residues. A compositionally biased stretch (basic and acidic residues) spans 930 to 939 (SHQELRRDEG). A phosphoserine mark is found at serine 961 and serine 1002. A disordered region spans residues 1034–1060 (APPSAEAKPPEAARPADEPTPASKCCS). Residues 1041–1050 (KPPEAARPAD) are compositionally biased toward basic and acidic residues. The region spanning 1066–1254 (MRKHVAMTLL…KQVAERINKG (189 aa)) is the DH domain. Serine 1331 is modified (phosphoserine). Disordered regions lie at residues 1564–1584 (HREPPPSLRSPPETAPEPAGP), 1616–1719 (GLEM…SSHG), 1991–2020 (TPPPPPDTGPEKLPSLEHRDSPWHRGPAPA), and 2036–2055 (FRLSSGGGSSSETVGRDDST). The segment covering 1568 to 1582 (PPSLRSPPETAPEPA) has biased composition (pro residues). The span at 1644–1680 (SPSPSGTLQSQASRSTISSSFGNEETPSSKEATAETT) shows a compositional bias: low complexity. Basic and acidic residues predominate over residues 2004–2013 (PSLEHRDSPW).

As to expression, highly expressed in the heart.

In terms of biological role, acts as a guanine nucleotide exchange factor (GEF) for RhoA GTPases. The polypeptide is Rho guanine nucleotide exchange factor 17 (ARHGEF17) (Homo sapiens (Human)).